Consider the following 309-residue polypeptide: Pyridoxal 5'-phosphate synthase subunit PDX1.1 (309 aa).

Methionine 1 carries the post-translational modification N-acetylmethionine. Residue aspartate 41 coordinates D-ribose 5-phosphate. Lysine 98 (schiff-base intermediate with D-ribose 5-phosphate) is an active-site residue. Glycine 170 serves as a coordination point for D-ribose 5-phosphate. Position 182 (arginine 182) interacts with D-glyceraldehyde 3-phosphate. Residues glycine 231 and 252–253 each bind D-ribose 5-phosphate; that span reads GS.

The protein belongs to the PdxS/SNZ family. As to quaternary structure, homodimer or heterodimer with PDX1.2 or PDX1.3. Interacts with PDX2. As to expression, expressed in flowers, shoots, leaves and weakly in roots.

It localises to the cytoplasm. It catalyses the reaction aldehydo-D-ribose 5-phosphate + D-glyceraldehyde 3-phosphate + L-glutamine = pyridoxal 5'-phosphate + L-glutamate + phosphate + 3 H2O + H(+). It functions in the pathway cofactor biosynthesis; pyridoxal 5'-phosphate biosynthesis. Functionally, catalyzes the formation of pyridoxal 5'-phosphate from ribose 5-phosphate (RBP), glyceraldehyde 3-phosphate (G3P) and ammonia. The ammonia is provided by PDX2. Can also use ribulose 5-phosphate and dihydroxyacetone phosphate as substrates, resulting from enzyme-catalyzed isomerization of RBP and G3P, respectively. Also plays an indirect role in resistance to singlet oxygen-generating photosensitizers. The chain is Pyridoxal 5'-phosphate synthase subunit PDX1.1 (PDX11) from Arabidopsis thaliana (Mouse-ear cress).